Here is a 101-residue protein sequence, read N- to C-terminus: Gastrin (101 aa).

The signal sequence occupies residues 1 to 21; sequence MPRLCVYMLVLVLALATFSEA. The interval 23-101 is disordered; the sequence is WKPRSQLQDA…FGRRSAEEDQ (79 aa). Residues 25 to 37 are compositionally biased toward polar residues; it reads PRSQLQDASSGPG. At Tyr-87 the chain carries Sulfotyrosine. A Phenylalanine amide modification is found at Phe-92. The span at 92–101 shows a compositional bias: basic and acidic residues; it reads FGRRSAEEDQ. The residue at position 96 (Ser-96) is a Phosphoserine. Positions 96–101 are excised as a propeptide; that stretch reads SAEEDQ.

It belongs to the gastrin/cholecystokinin family. Post-translationally, sulfation enhances proteolytic processing, and blocks peptide degradation. Levels of sulfation differ between proteolytically-cleaved gastrins and between tissues. Abundantly expressed in the stomach and duodenum. Low levels in brain, ovary and pancreas.

The protein localises to the secreted. Gastrin stimulates the stomach mucosa to produce and secrete hydrochloric acid and the pancreas to secrete its digestive enzymes. It also stimulates smooth muscle contraction and increases blood circulation and water secretion in the stomach and intestine. The protein is Gastrin (Gast) of Mus musculus (Mouse).